Here is a 140-residue protein sequence, read N- to C-terminus: UPF0132 membrane protein MJ1527 (140 aa).

3 consecutive transmembrane segments (helical) span residues 40–60 (MEGVLCYLLFWISGLIFLLLE), 70–90 (AMQSFITFLSLNLIAIIVSAI), and 92–112 (IIGWVASTLINIAIIILWIVG).

This sequence belongs to the UPF0132 family.

The protein resides in the cell membrane. The chain is UPF0132 membrane protein MJ1527 from Methanocaldococcus jannaschii (strain ATCC 43067 / DSM 2661 / JAL-1 / JCM 10045 / NBRC 100440) (Methanococcus jannaschii).